The chain runs to 547 residues: Glucose-6-phosphate isomerase (547 aa).

The active-site Proton donor is glutamate 351. Catalysis depends on residues histidine 382 and lysine 509.

The protein belongs to the GPI family.

The protein resides in the cytoplasm. The enzyme catalyses alpha-D-glucose 6-phosphate = beta-D-fructose 6-phosphate. Its pathway is carbohydrate biosynthesis; gluconeogenesis. It functions in the pathway carbohydrate degradation; glycolysis; D-glyceraldehyde 3-phosphate and glycerone phosphate from D-glucose: step 2/4. Its function is as follows. Catalyzes the reversible isomerization of glucose-6-phosphate to fructose-6-phosphate. This is Glucose-6-phosphate isomerase from Coxiella burnetii (strain RSA 493 / Nine Mile phase I).